The following is a 241-amino-acid chain: Lactate utilization protein C (241 aa).

It belongs to the LutC/YkgG family.

Functionally, is involved in L-lactate degradation and allows cells to grow with lactate as the sole carbon source. The sequence is that of Lactate utilization protein C from Bacillus velezensis (strain DSM 23117 / BGSC 10A6 / LMG 26770 / FZB42) (Bacillus amyloliquefaciens subsp. plantarum).